Consider the following 637-residue polypeptide: Neutral ceramidase (637 aa).

Mg(2+) is bound at residue His34. 2 residues coordinate Zn(2+): His96 and His204. Residue Ser256 is the Nucleophile of the active site. Positions 417 and 453 each coordinate Zn(2+). Positions 575, 577, and 580 each coordinate Mg(2+).

Belongs to the neutral ceramidase family. The cofactor is Zn(2+). Mg(2+) is required as a cofactor.

It catalyses the reaction an N-acylsphing-4-enine + H2O = sphing-4-enine + a fatty acid. The enzyme catalyses an N-acylsphinganine + H2O = sphinganine + a fatty acid. The catalysed reaction is an N-acyl-(4R)-4-hydroxysphinganine + H2O = (4R)-hydroxysphinganine + a fatty acid. It carries out the reaction N-(9Z-octadecenoyl)-sphing-4-enine + H2O = sphing-4-enine + (9Z)-octadecenoate. It catalyses the reaction N-(hexanoyl)sphing-4-enine + H2O = hexanoate + sphing-4-enine. The enzyme catalyses N-hexadecanoylsphing-4-enine + H2O = sphing-4-enine + hexadecanoate. The catalysed reaction is N-octadecanoylsphing-4-enine + H2O = sphing-4-enine + octadecanoate. It carries out the reaction N-eicosanoyl-sphing-4-enine + H2O = eicosanoate + sphing-4-enine. It catalyses the reaction N-(15Z-tetracosenoyl)-sphing-4-enine + H2O = (15Z)-tetracosenoate + sphing-4-enine. The enzyme catalyses N-tetracosanoyl-sphing-4-enine + H2O = tetracosanoate + sphing-4-enine. With respect to regulation, 90% of activity is inhibited by nickel, zinc and calcium ions. Magnesium, cobalt, copper and manganese ions inhibit between 50 and 80% of activity. In terms of biological role, catalyzes the cleavage of the N-acyl linkage of the ceramides (Cers) to yield sphingosine (Sph) and free fatty acid. Also catalyzes the synthesis of Cers from Sph and fatty acid. Cers containning C6-C24 fatty acids are well hydrolyzed, and Cers with mono unsaturated fatty acids are much more hydrolyzed than those with saturated fatty acids. This chain is Neutral ceramidase, found in Mycobacterium tuberculosis (strain ATCC 25618 / H37Rv).